We begin with the raw amino-acid sequence, 616 residues long: MPKLRSATSTEGRNMAGARALWRATGVKENDFGKPIIAIANSFTQFVPGHVHLKDMGSLVAGAIEEAGGIAKEFNTIAVDDGIAMGHGGMLYSLPSRELISDSVEYMVNAHCADALVCISNCDKITPGMMMAALRLNIPVIFVSGGPMEAGKTKLSDKIIKLDLVDAMVAGADDRVSDEDSEQIERSACPTCGSCSGMFTANSMNCLTEALGLSLPGNGSMLATHADRRELFLEAGRRIMDLTTRYYKHDDESALPRNIANFNAFENAMTLDIAMGGSSNTVLHLLAAAQEGEVDFTMEDIDRLSRLVPHLCKVAPSTPEYHMEDVHRAGGVMGILGELDRAGLIHNDAYHVAGASLKEVLAKWDIAQSSDEAVHRFFSAGPAGIPTTKAFSQACRWDSVDNDRVGGCIRKREFAFSQEGGLAVLSGNIAVDGCIVKTAGVDEDNHTFIGSARVYESQDDAVAGILGGEVVAGDVVVIRYEGPKGGPGMQEMLYPTSYLKSRGLGKACALITDGRFSGGTSGLSIGHVSPEAAAGGTIGLVETGDRIEIDIPARSIKLAISDIELAARRSAMEARGKQAWKPVGRVREVSLALKAYALLATSADKGAVRDTSKLED.

Residue Asp81 coordinates Mg(2+). Position 122 (Cys122) interacts with [2Fe-2S] cluster. Asp123 and Lys124 together coordinate Mg(2+). Lys124 carries the post-translational modification N6-carboxylysine. Cys195 serves as a coordination point for [2Fe-2S] cluster. Residue Glu491 participates in Mg(2+) binding. The Proton acceptor role is filled by Ser517.

The protein belongs to the IlvD/Edd family. In terms of assembly, homodimer. Requires [2Fe-2S] cluster as cofactor. It depends on Mg(2+) as a cofactor.

It carries out the reaction (2R)-2,3-dihydroxy-3-methylbutanoate = 3-methyl-2-oxobutanoate + H2O. It catalyses the reaction (2R,3R)-2,3-dihydroxy-3-methylpentanoate = (S)-3-methyl-2-oxopentanoate + H2O. It functions in the pathway amino-acid biosynthesis; L-isoleucine biosynthesis; L-isoleucine from 2-oxobutanoate: step 3/4. The protein operates within amino-acid biosynthesis; L-valine biosynthesis; L-valine from pyruvate: step 3/4. In terms of biological role, functions in the biosynthesis of branched-chain amino acids. Catalyzes the dehydration of (2R,3R)-2,3-dihydroxy-3-methylpentanoate (2,3-dihydroxy-3-methylvalerate) into 2-oxo-3-methylpentanoate (2-oxo-3-methylvalerate) and of (2R)-2,3-dihydroxy-3-methylbutanoate (2,3-dihydroxyisovalerate) into 2-oxo-3-methylbutanoate (2-oxoisovalerate), the penultimate precursor to L-isoleucine and L-valine, respectively. In Shewanella sediminis (strain HAW-EB3), this protein is Dihydroxy-acid dehydratase.